We begin with the raw amino-acid sequence, 739 residues long: Photosystem I P700 chlorophyll a apoprotein A1 (739 aa).

8 consecutive transmembrane segments (helical) span residues 61-84 (IFSA…FHGA), 147-170 (LYVT…FHYH), 186-210 (MNHH…HVSL), 281-299 (VAHH…GHMY), 336-359 (WHAQ…HHMY), 375-401 (LSLF…IFMV), 423-445 (AIIS…LYIH), and 520-538 (FMVH…LILL). C562 and C571 together coordinate [4Fe-4S] cluster. The next 2 helical transmembrane spans lie at 578–599 (HVFL…HFSW) and 653–675 (LSAY…MFLF). H664 contributes to the chlorophyll a' binding site. Chlorophyll a is bound by residues M672 and Y680. W681 is a binding site for phylloquinone. The helical transmembrane segment at 713 to 733 (AVGVAHYLLGGIVTTWAFFLA) threads the bilayer.

It belongs to the PsaA/PsaB family. As to quaternary structure, the PsaA/B heterodimer binds the P700 chlorophyll special pair and subsequent electron acceptors. PSI consists of a core antenna complex that captures photons, and an electron transfer chain that converts photonic excitation into a charge separation. The cyanobacterial PSI reaction center is composed of one copy each of PsaA,B,C,D,E,F,I,J,K,L,M and X, and forms trimeric complexes. PSI electron transfer chain: 5 chlorophyll a, 1 chlorophyll a', 2 phylloquinones and 3 4Fe-4S clusters. PSI core antenna: 90 chlorophyll a, 22 carotenoids, 3 phospholipids and 1 galactolipid. P700 is a chlorophyll a/chlorophyll a' dimer, A0 is one or more chlorophyll a, A1 is one or both phylloquinones and FX is a shared 4Fe-4S iron-sulfur center. serves as cofactor.

Its subcellular location is the cellular thylakoid membrane. It carries out the reaction reduced [plastocyanin] + hnu + oxidized [2Fe-2S]-[ferredoxin] = oxidized [plastocyanin] + reduced [2Fe-2S]-[ferredoxin]. PsaA and PsaB bind P700, the primary electron donor of photosystem I (PSI), as well as the electron acceptors A0, A1 and FX. PSI is a plastocyanin/cytochrome c6-ferredoxin oxidoreductase, converting photonic excitation into a charge separation, which transfers an electron from the donor P700 chlorophyll pair to the spectroscopically characterized acceptors A0, A1, FX, FA and FB in turn. Oxidized P700 is reduced on the lumenal side of the thylakoid membrane by plastocyanin or cytochrome c6. The sequence is that of Photosystem I P700 chlorophyll a apoprotein A1 from Picosynechococcus sp. (strain ATCC 27264 / PCC 7002 / PR-6) (Agmenellum quadruplicatum).